The sequence spans 1266 residues: Rho GTPase-activating protein 29 (1266 aa).

Residues serine 171, serine 176, serine 179, and serine 190 each carry the phosphoserine modification. The 271-residue stretch at 192-462 (IELDNLLLKN…SAKLYDPGQE (271 aa)) folds into the F-BAR domain. The stretch at 296 to 418 (RKNEMEKQRK…EILTQLRTLV (123 aa)) forms a coiled coil. A disordered region spans residues 482-501 (NVNKQMTNSPQTSGYEPADS). The segment covering 483-495 (VNKQMTNSPQTSG) has biased composition (polar residues). A phosphoserine mark is found at serine 501, serine 521, and serine 554. The span at 542 to 561 (DSESTGGSSESRSLDSESIS) shows a compositional bias: low complexity. The interval 542–601 (DSESTGGSSESRSLDSESISPGDFHRKLPRTPSSGTMSSADDLDEREPPSPSEAGPNSLG) is disordered. Residues 614–659 (THKFRKLRSPTKCRDCDGIVMFPGVECEECLLVCHRKCLENLVIIC) form a Phorbol-ester/DAG-type zinc finger. Residues 673-888 (AEFIQVAKKE…FLITYSQKIF (216 aa)) enclose the Rho-GAP domain. Phosphoserine is present on residues serine 920, serine 956, and serine 1028. 3 disordered regions span residues 1039 to 1081 (SSPT…KVNG), 1116 to 1157 (GLTV…ATAV), and 1209 to 1266 (KSDP…PQFV). Residues 1072 to 1081 (SNTTRSKVNG) are compositionally biased toward polar residues. The segment covering 1124-1136 (NRDHPGSKAHAEP) has biased composition (basic and acidic residues). A phosphoserine mark is found at serine 1149 and serine 1151. A compositionally biased stretch (acidic residues) spans 1256 to 1266 (EDLEDEIPQFV). The interaction with PTPN13/PTPL1 stretch occupies residues 1263–1266 (PQFV).

Interacts with PTPN13/PTPL1. Interacts with RAP2A via its coiled coil domain. Interacts with RASIP1.

Its function is as follows. GTPase activator for the Rho-type GTPases by converting them to an inactive GDP-bound state. Has strong activity toward RHOA, and weaker activity toward RAC1 and CDC42. May act as a specific effector of RAP2A to regulate Rho. In concert with RASIP1, suppresses RhoA signaling and dampens ROCK and MYH9 activities in endothelial cells and plays an essential role in blood vessel tubulogenesis. The protein is Rho GTPase-activating protein 29 (Arhgap29) of Mus musculus (Mouse).